Here is a 490-residue protein sequence, read N- to C-terminus: AP-5 complex subunit mu-1 (490 aa).

The region spanning 206–476 is the MHD domain; it reads KPQVSISITE…LISSDYYIWN (271 aa).

This sequence belongs to the adaptor complexes medium subunit family. As to quaternary structure, probably part of the adaptor protein complex 5 (AP-5) a tetramer composed of AP5B1, AP5M1, AP5S1 and AP5Z1. Expressed in various tumor cell lines including Jurkat, Hep-G2 and HeLa.

Its subcellular location is the cytoplasm. The protein resides in the cytosol. It is found in the late endosome membrane. It localises to the lysosome membrane. Its function is as follows. As part of AP-5, a probable fifth adaptor protein complex it may be involved in endosomal transport. According to PubMed:18395520, it may play a role in cell death. In Homo sapiens (Human), this protein is AP-5 complex subunit mu-1 (AP5M1).